The chain runs to 36 residues: Thrombin (36 aa).

The Peptidase S1 domain maps to 19–36 (IVKGIDAEVASAPMQVML).

This sequence belongs to the peptidase S1 family. In terms of assembly, forms a heterodimer with SERPINA5. In terms of processing, the gamma-carboxyglutamyl residues, which bind calcium ions, result from the carboxylation of glutamyl residues by a microsomal enzyme, the vitamin K-dependent carboxylase. The modified residues are necessary for the calcium-dependent interaction with a negatively charged phospholipid surface, which is essential for the conversion of prothrombin to thrombin. Post-translationally, N-glycosylated. As to expression, expressed by the liver and secreted in plasma.

The protein resides in the secreted. It catalyses the reaction Selective cleavage of Arg-|-Gly bonds in fibrinogen to form fibrin and release fibrinopeptides A and B.. Its activity is regulated as follows. Inhibited by SERPINA5. Its function is as follows. Thrombin, which cleaves bonds after Arg and Lys, converts fibrinogen to fibrin and activates factors V, VII, VIII, XIII, and, in complex with thrombomodulin, protein C. Functions in blood homeostasis, inflammation and wound healing. The protein is Thrombin of Salmo salar (Atlantic salmon).